The chain runs to 734 residues: Phosphoribosylformylglycinamidine synthase subunit PurL (734 aa).

H46 is an active-site residue. 2 residues coordinate ATP: Y49 and K88. E90 lines the Mg(2+) pocket. Residues 91-94 and R113 each bind substrate; that span reads SHNH. H92 functions as the Proton acceptor in the catalytic mechanism. D114 is a binding site for Mg(2+). Q237 is a substrate binding site. D265 is a binding site for Mg(2+). 309 to 311 serves as a coordination point for substrate; sequence ESQ. ATP is bound by residues D489 and G526. Mg(2+) is bound at residue N527. S529 contacts substrate.

This sequence belongs to the FGAMS family. As to quaternary structure, monomer. Part of the FGAM synthase complex composed of 1 PurL, 1 PurQ and 2 PurS subunits.

Its subcellular location is the cytoplasm. It carries out the reaction N(2)-formyl-N(1)-(5-phospho-beta-D-ribosyl)glycinamide + L-glutamine + ATP + H2O = 2-formamido-N(1)-(5-O-phospho-beta-D-ribosyl)acetamidine + L-glutamate + ADP + phosphate + H(+). It participates in purine metabolism; IMP biosynthesis via de novo pathway; 5-amino-1-(5-phospho-D-ribosyl)imidazole from N(2)-formyl-N(1)-(5-phospho-D-ribosyl)glycinamide: step 1/2. In terms of biological role, part of the phosphoribosylformylglycinamidine synthase complex involved in the purines biosynthetic pathway. Catalyzes the ATP-dependent conversion of formylglycinamide ribonucleotide (FGAR) and glutamine to yield formylglycinamidine ribonucleotide (FGAM) and glutamate. The FGAM synthase complex is composed of three subunits. PurQ produces an ammonia molecule by converting glutamine to glutamate. PurL transfers the ammonia molecule to FGAR to form FGAM in an ATP-dependent manner. PurS interacts with PurQ and PurL and is thought to assist in the transfer of the ammonia molecule from PurQ to PurL. The chain is Phosphoribosylformylglycinamidine synthase subunit PurL from Gluconobacter oxydans (strain 621H) (Gluconobacter suboxydans).